The following is a 590-amino-acid chain: G protein-coupled receptor kinase 5 (590 aa).

The N-terminal stretch occupies residues 1-185; that stretch reads MELENIVANT…LERQPVTKNT (185 aa). Residues 20–39 form an interaction with calmodulin region; that stretch reads GGKRKGKSKKWKEILKFPHI. The RGS domain occupies 53–171; that stretch reads YYSLCDKQPI…LDSMYFDRFL (119 aa). S136 carries the post-translational modification Phosphoserine. Positions 186 to 448 constitute a Protein kinase domain; it reads FRQYRVLGKG…AAEVKRHPFF (263 aa). Residues 192-200 and K215 each bind ATP; that span reads LGKGGFGEV. D311 serves as the catalytic Proton acceptor. A Nuclear localization signal motif is present at residues 388–395; that stretch reads RKEKVKRE. One can recognise an AGC-kinase C-terminal domain in the interval 449-514; the sequence is RNMNFKRLEA…GSVPIPWQNE (66 aa). At S484 the chain carries Phosphoserine; by autocatalysis. T485 carries the post-translational modification Phosphothreonine; by autocatalysis. The segment at 546 to 565 is sufficient for membrane localization; the sequence is PKKGLFHRLFRRQHQSNSKS. Positions 557–590 are disordered; sequence RQHQSNSKSSPTPKTSCNHRINSNHINSNSTGSS. Residues 561–590 are compositionally biased toward low complexity; it reads SNSKSSPTPKTSCNHRINSNHINSNSTGSS. At S579 the chain carries Phosphoserine.

Belongs to the protein kinase superfamily. AGC Ser/Thr protein kinase family. GPRK subfamily. As to quaternary structure, interacts with ST13 (via the C-terminus 303-319 AA). Interacts with TP53/p53. Interacts with HTR4 (via C-terminus 330-346 AA); this interaction is promoted by 5-HT (serotonin). Interacts with HDAC5. Interacts with GIT1. Post-translationally, autophosphorylated. Autophosphorylation may play a critical role in the regulation of GRK5 kinase activity.

The protein resides in the cytoplasm. It is found in the nucleus. Its subcellular location is the cell membrane. The catalysed reaction is [G-protein-coupled receptor] + ATP = [G-protein-coupled receptor]-phosphate + ADP + H(+). Its activity is regulated as follows. Inhibited by calmodulin with an IC(50) of 50 nM. Calmodulin inhibits GRK5 association with receptor and phospholipid. In terms of biological role, serine/threonine kinase that phosphorylates preferentially the activated forms of a variety of G-protein-coupled receptors (GPCRs). Such receptor phosphorylation initiates beta-arrestin-mediated receptor desensitization, internalization, and signaling events leading to their down-regulation. Phosphorylates a variety of GPCRs, including adrenergic receptors, muscarinic acetylcholine receptors (more specifically Gi-coupled M2/M4 subtypes), dopamine receptors and opioid receptors. In addition to GPCRs, also phosphorylates various substrates: Hsc70-interacting protein/ST13, TP53/p53, HDAC5, and arrestin-1/ARRB1. Phosphorylation of ARRB1 by GRK5 inhibits G-protein independent MAPK1/MAPK3 signaling downstream of 5HT4-receptors. Phosphorylation of HDAC5, a repressor of myocyte enhancer factor 2 (MEF2) leading to nuclear export of HDAC5 and allowing MEF2-mediated transcription. Phosphorylation of TP53/p53, a crucial tumor suppressor, inhibits TP53/p53-mediated apoptosis. Phosphorylation of ST13 regulates internalization of the chemokine receptor. Phosphorylates rhodopsin (RHO) (in vitro) and a non G-protein-coupled receptor, LRP6 during Wnt signaling (in vitro). The polypeptide is G protein-coupled receptor kinase 5 (Grk5) (Mus musculus (Mouse)).